A 277-amino-acid polypeptide reads, in one-letter code: Large ribosomal subunit protein uL2 (277 aa).

The segment at 222 to 277 is disordered; it reads GVAMNPVDHPHGGGEGRTSGGRHPVTPWGKPTKGKKTRSNKATDKFIMRSRHQRKK.

Belongs to the universal ribosomal protein uL2 family. As to quaternary structure, part of the 50S ribosomal subunit. Forms a bridge to the 30S subunit in the 70S ribosome.

Its function is as follows. One of the primary rRNA binding proteins. Required for association of the 30S and 50S subunits to form the 70S ribosome, for tRNA binding and peptide bond formation. It has been suggested to have peptidyltransferase activity; this is somewhat controversial. Makes several contacts with the 16S rRNA in the 70S ribosome. The polypeptide is Large ribosomal subunit protein uL2 (Brucella melitensis biotype 1 (strain ATCC 23456 / CCUG 17765 / NCTC 10094 / 16M)).